The chain runs to 1444 residues: Bromodomain-containing protein 4 (1444 aa).

7 disordered regions span residues 1–44, 154–217, 279–362, 492–523, 540–645, 722–986, and 1020–1422; these read MGDG…PKRQ, VEIS…PQPI, AAPP…KQQE, PVMATASSSDTSSDSSSESESSTDDSEEERAQ, AALS…GGAA, CLRK…SSQP, and TSLM…RREA. Positions 11-27 are enriched in low complexity; that stretch reads SGSSSSQGQPSSQAPSS. The region spanning 43 to 149 is the Bromo 1 domain; that stretch reads RQTNQLQYLL…KVFLTKISEM (107 aa). Polar residues predominate over residues 186–196; sequence ASPQTRGLSNL. The segment covering 206–216 has biased composition (pro residues); sequence PQGPPTLPPQP. Over residues 303–319 the composition is skewed to polar residues; the sequence is TTTPTANDQLNESSPAE. The span at 327 to 347 shows a compositional bias: basic and acidic residues; the sequence is PRRDNTRPSKLPKKEAPDSQH. The Bromo 2 domain maps to 358–467; it reads PKQQEQLRYC…DVFEMRFAKM (110 aa). Residues 498–511 show a composition bias toward low complexity; sequence SSSDTSSDSSSESE. Residues 498-517 form an NPS region region; the sequence is SSSDTSSDSSSESESSTDDS. A BID region region spans residues 538–610; it reads QLAALSQPQA…SKKLSKKEGG (73 aa). The span at 549–569 shows a compositional bias: basic residues; the sequence is KPKKKEKEKKEKKKDKHKKKA. The NET domain occupies 633 to 730; that stretch reads DTEEDLGLTG…SCLRKKKKPA (98 aa). Composition is skewed to low complexity over residues 746–760, 800–823, 919–954, and 1036–1046; these read GTSSDSGSSSESSSS, LQPQTPALQPSIQLKQQQPQHPSP, LQQSTSQQQPPPQQTLVPPQQLQPQQQQPAPPQQQH, and PSLLQSVQVQS. Positions 1090–1109 are enriched in polar residues; it reads PLQTAQTQPGQHKVSMPSTK. The span at 1110–1121 shows a compositional bias: low complexity; sequence AQQIIQQQQATQ. Residues 1126 to 1444 are C-terminal (CTD) region; it reads RQHKADSYNS…LMAIFEENLF (319 aa). A compositionally biased stretch (polar residues) spans 1151–1163; it reads QIPQYSLVHQSPS. The span at 1246–1255 shows a compositional bias: basic and acidic residues; the sequence is QDKEKFKQEP. Over residues 1282-1296 the composition is skewed to low complexity; it reads SSTTPSSGLKSSSDS. A compositionally biased stretch (basic and acidic residues) spans 1298 to 1357; it reads EQFRRAAREKEEREKALKAQVEQAEKDRLRKEQEKLRGRDEEDSIEPPRRPLEEPRRRQE. The segment covering 1367–1389 has biased composition (low complexity); the sequence is QHQTQAQAQTLNPAQSPSASQPT. Residues 1405–1422 are compositionally biased toward basic and acidic residues; sequence QQREMARRREQERRRREA.

This sequence belongs to the BET family. Widely expressed.

Its subcellular location is the nucleus. The protein localises to the chromosome. Its function is as follows. Chromatin reader protein that recognizes and binds acetylated histones and plays a key role in transmission of epigenetic memory across cell divisions and transcription regulation. Remains associated with acetylated chromatin throughout the entire cell cycle and provides epigenetic memory for postmitotic G1 gene transcription by preserving acetylated chromatin status and maintaining high-order chromatin structure. During interphase, plays a key role in regulating the transcription of signal-inducible genes by associating with the P-TEFb complex and recruiting it to promoters. The sequence is that of Bromodomain-containing protein 4 (brd4) from Danio rerio (Zebrafish).